Reading from the N-terminus, the 189-residue chain is Glucose-6-phosphate isomerase (189 aa).

Positions 88, 90, 97, and 136 each coordinate Fe cation.

This sequence belongs to the archaeal-type GPI family. As to quaternary structure, homodimer.

It localises to the cytoplasm. It catalyses the reaction alpha-D-glucose 6-phosphate = beta-D-fructose 6-phosphate. The protein operates within carbohydrate degradation; glycolysis; D-glyceraldehyde 3-phosphate and glycerone phosphate from D-glucose: step 2/4. In Thermococcus gammatolerans (strain DSM 15229 / JCM 11827 / EJ3), this protein is Glucose-6-phosphate isomerase.